Here is a 1671-residue protein sequence, read N- to C-terminus: DENN domain-containing protein Crag (1671 aa).

One can recognise an MABP domain in the interval 39–195; the sequence is IEPITDIGVY…DVYLCYKKSM (157 aa). A uDENN domain is found at 187 to 364; that stretch reads VYLCYKKSMY…DEVPFPAPSI (178 aa). The 137-residue stretch at 385–521 folds into the cDENN domain; sequence PLPRSGAGFH…AARLLRQTLT (137 aa). Residues 523 to 632 form the dDENN domain; the sequence is LENAKPISYD…ERSFVSDGDH (110 aa). Disordered stretches follow at residues 997-1160, 1245-1311, and 1415-1435; these read QQQQ…PVAS, ANST…RLSE, and VEES…ANGN. Acidic residues-rich tracts occupy residues 1011 to 1023 and 1050 to 1061; these read GDDD…EDEY and YEADEEDEDEVD. Residues 1072–1089 are compositionally biased toward polar residues; sequence RVQSPTKISPRTPVTQND. Residues 1100-1119 are compositionally biased toward low complexity; the sequence is AASATPTQETQQEQQHSQSQ. Residues 1136-1147 are compositionally biased toward polar residues; the sequence is RSATFDESTQIG. Positions 1254–1277 are enriched in basic residues; it reads NGHHPHGLHHGHHHPHHHHHHHSQ. A compositionally biased stretch (basic and acidic residues) spans 1281-1301; that stretch reads AEQEEHDAAVHEEGKLRRVSS.

In terms of assembly, interacts with Cam. Interacts with Rab10. Interacts (via the DENN domains) with Rab11. Expressed in the adult head and body.

It is found in the cytoplasm. It localises to the cell cortex. The protein resides in the early endosome. The protein localises to the recycling endosome. Its subcellular location is the cytoplasmic granule. Calmodulin-binding protein that acts as a guanine exchange factor for Rab10 and Rab11. Essential for maintenance of adult photoreceptor cells. Upon light stimulation, required for trafficking of newly synthesized ninaE (Rh1) from the trans-Golgi network to rhabdomere membranes via Rab11-dependent vesicular transport. During egg development, essential for establishing and maintaining epithelial cell polarity by regulating the correct polarized deposition of basal membrane (BM) proteins in follicular epithelial (FE) cells. Functions by targeting Rab10 to the basal cytoplasm, where it restricts the secretion of BM proteins such as trol/Pcan and vkg/Coll IV to the basal surface. Appears to be involved in regulating the levels and distribution of the guanine nucleotide exchange factor strat, however the two proteins appear to have independent roles in regulating polarized BM protein secretion in the FE. This is DENN domain-containing protein Crag from Drosophila melanogaster (Fruit fly).